Consider the following 168-residue polypeptide: Crossover junction endodeoxyribonuclease RuvC (168 aa).

Catalysis depends on residues aspartate 10, glutamate 70, and aspartate 143. Mg(2+) is bound by residues aspartate 10, glutamate 70, and aspartate 143.

Belongs to the RuvC family. In terms of assembly, homodimer which binds Holliday junction (HJ) DNA. The HJ becomes 2-fold symmetrical on binding to RuvC with unstacked arms; it has a different conformation from HJ DNA in complex with RuvA. In the full resolvosome a probable DNA-RuvA(4)-RuvB(12)-RuvC(2) complex forms which resolves the HJ. The cofactor is Mg(2+).

It localises to the cytoplasm. The catalysed reaction is Endonucleolytic cleavage at a junction such as a reciprocal single-stranded crossover between two homologous DNA duplexes (Holliday junction).. In terms of biological role, the RuvA-RuvB-RuvC complex processes Holliday junction (HJ) DNA during genetic recombination and DNA repair. Endonuclease that resolves HJ intermediates. Cleaves cruciform DNA by making single-stranded nicks across the HJ at symmetrical positions within the homologous arms, yielding a 5'-phosphate and a 3'-hydroxyl group; requires a central core of homology in the junction. The consensus cleavage sequence is 5'-(A/T)TT(C/G)-3'. Cleavage occurs on the 3'-side of the TT dinucleotide at the point of strand exchange. HJ branch migration catalyzed by RuvA-RuvB allows RuvC to scan DNA until it finds its consensus sequence, where it cleaves and resolves the cruciform DNA. The polypeptide is Crossover junction endodeoxyribonuclease RuvC (Roseiflexus sp. (strain RS-1)).